Here is a 427-residue protein sequence, read N- to C-terminus: Serine--tRNA ligase (427 aa).

Residue 230–232 coordinates L-serine; sequence TSE. Residues 260–262 and V276 each bind ATP; that span reads RRE. An L-serine-binding site is contributed by E283. 347–350 provides a ligand contact to ATP; it reads ELTS. An L-serine-binding site is contributed by T387.

Belongs to the class-II aminoacyl-tRNA synthetase family. Type-1 seryl-tRNA synthetase subfamily. Homodimer. The tRNA molecule binds across the dimer.

Its subcellular location is the cytoplasm. It catalyses the reaction tRNA(Ser) + L-serine + ATP = L-seryl-tRNA(Ser) + AMP + diphosphate + H(+). The catalysed reaction is tRNA(Sec) + L-serine + ATP = L-seryl-tRNA(Sec) + AMP + diphosphate + H(+). It participates in aminoacyl-tRNA biosynthesis; selenocysteinyl-tRNA(Sec) biosynthesis; L-seryl-tRNA(Sec) from L-serine and tRNA(Sec): step 1/1. Its function is as follows. Catalyzes the attachment of serine to tRNA(Ser). Is also able to aminoacylate tRNA(Sec) with serine, to form the misacylated tRNA L-seryl-tRNA(Sec), which will be further converted into selenocysteinyl-tRNA(Sec). This is Serine--tRNA ligase from Micrococcus luteus (strain ATCC 4698 / DSM 20030 / JCM 1464 / CCM 169 / CCUG 5858 / IAM 1056 / NBRC 3333 / NCIMB 9278 / NCTC 2665 / VKM Ac-2230) (Micrococcus lysodeikticus).